The sequence spans 170 residues: MSVKSKQYFNIFIFIISLIFFDQLSKYLVVKYVKLGSVYFSFFENFFRIIHVRNTGILFSIGSNINYSLKKIFFLAMPIFILIFIFSLSLKEKNRIARISLLLIFSGGVGNVIDRLFRPSGVVDFLDFKFYGIFGLDRWPTFNFADSYVVIGMILFLVYDFFIKRKAFNT.

3 helical membrane-spanning segments follow: residues 9–29 (FNIF…KYLV), 72–92 (IFFL…SLKE), and 96–118 (IARI…RLFR). Residues aspartate 124 and aspartate 146 contribute to the active site. Residues 143 to 163 (NFADSYVVIGMILFLVYDFFI) form a helical membrane-spanning segment.

Belongs to the peptidase A8 family.

The protein localises to the cell inner membrane. It catalyses the reaction Release of signal peptides from bacterial membrane prolipoproteins. Hydrolyzes -Xaa-Yaa-Zaa-|-(S,diacylglyceryl)Cys-, in which Xaa is hydrophobic (preferably Leu), and Yaa (Ala or Ser) and Zaa (Gly or Ala) have small, neutral side chains.. The protein operates within protein modification; lipoprotein biosynthesis (signal peptide cleavage). In terms of biological role, this protein specifically catalyzes the removal of signal peptides from prolipoproteins. The polypeptide is Lipoprotein signal peptidase (Borreliella afzelii (strain PKo) (Borrelia afzelii)).